Reading from the N-terminus, the 159-residue chain is Eukaryotic translation initiation factor 5A-3 (159 aa).

Over residues 1-12 (MSDEEHQFESKA) the composition is skewed to basic and acidic residues. Residues 1–21 (MSDEEHQFESKADAGASKTYP) form a disordered region. Lys52 carries the post-translational modification Hypusine.

It belongs to the eIF-5A family. Post-translationally, lys-52 undergoes hypusination, a unique post-translational modification that consists in the addition of a butylamino group from spermidine to lysine side chain, leading to the formation of the unusual amino acid hypusine. eIF-5As are the only known proteins to undergo this modification, which is essential for their function.

Translation factor that promotes translation elongation and termination, particularly upon ribosome stalling at specific amino acid sequence contexts. Binds between the exit (E) and peptidyl (P) site of the ribosome and promotes rescue of stalled ribosome: specifically required for efficient translation of polyproline-containing peptides as well as other motifs that stall the ribosome. Acts as a ribosome quality control (RQC) cofactor by joining the RQC complex to facilitate peptidyl transfer during CAT tailing step. The chain is Eukaryotic translation initiation factor 5A-3 from Solanum lycopersicum (Tomato).